A 388-amino-acid chain; its full sequence is Succinate--CoA ligase [ADP-forming] subunit beta (388 aa).

Residues 9–244 (KQLFARYGLP…PSQEDPREAQ (236 aa)) enclose the ATP-grasp domain. Residues K46, 53-55 (GRG), E99, T102, and E107 each bind ATP. Mg(2+) contacts are provided by N199 and D213. Substrate contacts are provided by residues N264 and 321 to 323 (GIV).

This sequence belongs to the succinate/malate CoA ligase beta subunit family. In terms of assembly, heterotetramer of two alpha and two beta subunits. Requires Mg(2+) as cofactor.

The enzyme catalyses succinate + ATP + CoA = succinyl-CoA + ADP + phosphate. It catalyses the reaction GTP + succinate + CoA = succinyl-CoA + GDP + phosphate. The protein operates within carbohydrate metabolism; tricarboxylic acid cycle; succinate from succinyl-CoA (ligase route): step 1/1. Succinyl-CoA synthetase functions in the citric acid cycle (TCA), coupling the hydrolysis of succinyl-CoA to the synthesis of either ATP or GTP and thus represents the only step of substrate-level phosphorylation in the TCA. The beta subunit provides nucleotide specificity of the enzyme and binds the substrate succinate, while the binding sites for coenzyme A and phosphate are found in the alpha subunit. The chain is Succinate--CoA ligase [ADP-forming] subunit beta from Photorhabdus laumondii subsp. laumondii (strain DSM 15139 / CIP 105565 / TT01) (Photorhabdus luminescens subsp. laumondii).